The sequence spans 162 residues: Cyclic pyranopterin monophosphate synthase (162 aa).

Substrate-binding positions include 75-77 (LCH) and 113-114 (ME). Residue D128 is part of the active site.

The protein belongs to the MoaC family. Homohexamer; trimer of dimers.

The enzyme catalyses (8S)-3',8-cyclo-7,8-dihydroguanosine 5'-triphosphate = cyclic pyranopterin phosphate + diphosphate. Its pathway is cofactor biosynthesis; molybdopterin biosynthesis. Functionally, catalyzes the conversion of (8S)-3',8-cyclo-7,8-dihydroguanosine 5'-triphosphate to cyclic pyranopterin monophosphate (cPMP). This is Cyclic pyranopterin monophosphate synthase from Burkholderia ambifaria (strain ATCC BAA-244 / DSM 16087 / CCUG 44356 / LMG 19182 / AMMD) (Burkholderia cepacia (strain AMMD)).